We begin with the raw amino-acid sequence, 80 residues long: Putative defensin-like protein 15 (80 aa).

The first 29 residues, 1–29 (MAKFASIITFIYAALVLFAAFEVPTMVEA), serve as a signal peptide directing secretion. Q30 bears the Pyrrolidone carboxylic acid mark. 4 disulfide bridges follow: C33-C80, C44-C65, C50-C74, and C54-C76.

Belongs to the DEFL family.

The protein localises to the secreted. In terms of biological role, confers broad-spectrum resistance to pathogens. This chain is Putative defensin-like protein 15 (PDF1.2B), found in Arabidopsis thaliana (Mouse-ear cress).